Reading from the N-terminus, the 262-residue chain is MTTISHLRKWKQQQRKFTSITAYDAAFARLFAEQGIKVMLVGDSLGMTMQGHDSTLPVTLEDMVYHTRCVRRGAPSCLLLADLPFMSYATPAQTFENAAALMRAGANMVKLEGGAWLADTVNGLTARAVPVCGHLGLTPQSVNIFGGYKIQGRDAVGADQLLADARTLEQAGAQLLVLECVPVALAERVTHELSIPVIGIGAGAVTDGQILVMQDALGITGDSAPSFAKDFLAAGGDIAAAVRRYVQEVETGQFPAAEHSFQ.

Positions 43 and 82 each coordinate Mg(2+). Residues 43 to 44 (DS), Asp82, and Lys110 contribute to the 3-methyl-2-oxobutanoate site. Residue Glu112 coordinates Mg(2+). The Proton acceptor role is filled by Glu179.

Belongs to the PanB family. In terms of assembly, homodecamer; pentamer of dimers. Mg(2+) serves as cofactor.

The protein resides in the cytoplasm. It carries out the reaction 3-methyl-2-oxobutanoate + (6R)-5,10-methylene-5,6,7,8-tetrahydrofolate + H2O = 2-dehydropantoate + (6S)-5,6,7,8-tetrahydrofolate. The protein operates within cofactor biosynthesis; (R)-pantothenate biosynthesis; (R)-pantoate from 3-methyl-2-oxobutanoate: step 1/2. Its function is as follows. Catalyzes the reversible reaction in which hydroxymethyl group from 5,10-methylenetetrahydrofolate is transferred onto alpha-ketoisovalerate to form ketopantoate. The sequence is that of 3-methyl-2-oxobutanoate hydroxymethyltransferase from Sodalis glossinidius (strain morsitans).